The sequence spans 490 residues: GTPase Der (490 aa).

EngA-type G domains follow at residues 1–165 and 227–400; these read MRIA…QIPV and LKVA…TIAT. GTP is bound by residues 7–14, 54–58, 117–120, 233–240, 280–284, and 345–348; these read GRPNVGKS, DTGGV, NKAD, GHPNVGKS, DTAGL, and NKWD. One can recognise a KH-like domain in the interval 401–485; sequence TKLSTSLVNK…PFDLEYKAKP (85 aa).

Belongs to the TRAFAC class TrmE-Era-EngA-EngB-Septin-like GTPase superfamily. EngA (Der) GTPase family. In terms of assembly, associates with the 50S ribosomal subunit.

Functionally, GTPase that plays an essential role in the late steps of ribosome biogenesis. The sequence is that of GTPase Der from Chlamydia trachomatis serovar L2b (strain UCH-1/proctitis).